Here is a 248-residue protein sequence, read N- to C-terminus: Adenosylcobinamide-GDP ribazoletransferase (248 aa).

7 helical membrane passes run 24–44 (EINLKKGSALLPFVGVIIGAW), 70–90 (IIITGGFHVDALADTADGLFS), 106–126 (VGANGVIAICFYFLFYGALFL), 134–154 (IGWLFFVLPIVAKGVTMLLFA), 168–188 (IFLGVPWWPIVIAQVIVLVAL), 189–209 (GAFFSYIGVIAYAGVILFTII), and 228–248 (AGGQMGQLICLFCLVLLWGLI).

Belongs to the CobS family. The cofactor is Mg(2+).

The protein resides in the cell membrane. It carries out the reaction alpha-ribazole + adenosylcob(III)inamide-GDP = adenosylcob(III)alamin + GMP + H(+). The catalysed reaction is alpha-ribazole 5'-phosphate + adenosylcob(III)inamide-GDP = adenosylcob(III)alamin 5'-phosphate + GMP + H(+). Its pathway is cofactor biosynthesis; adenosylcobalamin biosynthesis; adenosylcobalamin from cob(II)yrinate a,c-diamide: step 7/7. Joins adenosylcobinamide-GDP and alpha-ribazole to generate adenosylcobalamin (Ado-cobalamin). Also synthesizes adenosylcobalamin 5'-phosphate from adenosylcobinamide-GDP and alpha-ribazole 5'-phosphate. This chain is Adenosylcobinamide-GDP ribazoletransferase, found in Listeria monocytogenes serotype 4a (strain HCC23).